We begin with the raw amino-acid sequence, 287 residues long: mRNA-capping enzyme small subunit (287 aa).

Heterodimer of a large and a small subunit.

It localises to the virion. It catalyses the reaction a 5'-end (5'-triphosphoguanosine)-ribonucleoside in mRNA + S-adenosyl-L-methionine = a 5'-end (N(7)-methyl 5'-triphosphoguanosine)-ribonucleoside in mRNA + S-adenosyl-L-homocysteine. In terms of biological role, catalyzes the last reaction in the mRNA cap formation pathway. This Erythrocebus patas (Red guenon) protein is mRNA-capping enzyme small subunit.